Reading from the N-terminus, the 319-residue chain is Ubiquinone biosynthesis protein COQ9, mitochondrial (319 aa).

The N-terminal 45 residues, 1–45 (MAATVAFSGVLRRAGWRLLQLRCLPVPRCRPALAPRAFRASAMQL), are a transit peptide targeting the mitochondrion. Positions 17–32 (RLLQLRCLPVPRCRPA) match the SIFI-degron motif. Residues 46 to 99 (RSLDQQKDQPPPSSSQQQSEAQGAEEPNPEALRSPPRYTDQGGEEEEDYESEEQ) are disordered. Over residues 87–98 (GGEEEEDYESEE) the composition is skewed to acidic residues. At Lys176 the chain carries N6-acetyllysine. Residue Arg245 participates in a 1,2-diacylglycero-3-phosphoethanolamine binding.

Belongs to the COQ9 family. In terms of assembly, homodimer. Heterodimer; two heterodimers of COQ7:COQ9 come together on the same side of the lipid pseudo-bilayer and form a curved tetramer with a hydrophobic surface suitable for membrane interaction. These two tetramers assemble into a soluble octamer with a pseudo-bilayer of lipids captured within. Interacts with COQ7; this interaction allows ubiquinone (CoQ) isoprene intermediates presentation to COQ7 and facilitates the COQ7-mediated hydroxylase step. Post-translationally, in response to mitochondrial stress, the precursor protein is ubiquitinated by the SIFI complex in the cytoplasm before mitochondrial import, leading to its degradation. Within the SIFI complex, UBR4 initiates ubiquitin chain that are further elongated or branched by KCMF1.

Its subcellular location is the mitochondrion. It participates in cofactor biosynthesis; ubiquinone biosynthesis. Functionally, membrane-associated protein that warps the membrane surface to access and bind aromatic isoprenes with high specificity, including ubiquinone (CoQ) isoprene intermediates and presents them directly to COQ7, therefore facilitating the COQ7-mediated hydroxylase step. Participates in the biosynthesis of coenzyme Q, also named ubiquinone, an essential lipid-soluble electron transporter for aerobic cellular respiration. The protein is Ubiquinone biosynthesis protein COQ9, mitochondrial of Bos taurus (Bovine).